Here is a 342-residue protein sequence, read N- to C-terminus: Hydrogenase expression/formation protein HupV (342 aa).

This sequence belongs to the HupK family.

The protein is Hydrogenase expression/formation protein HupV (hupV) of Azotobacter chroococcum mcd 1.